The chain runs to 366 residues: 2-aminoethylphosphonate--pyruvate transaminase (366 aa).

Lys192 is modified (N6-(pyridoxal phosphate)lysine).

The protein belongs to the class-V pyridoxal-phosphate-dependent aminotransferase family. PhnW subfamily. As to quaternary structure, homodimer. Requires pyridoxal 5'-phosphate as cofactor.

The catalysed reaction is (2-aminoethyl)phosphonate + pyruvate = phosphonoacetaldehyde + L-alanine. Functionally, involved in phosphonate degradation. This is 2-aminoethylphosphonate--pyruvate transaminase (phnW) from Lysinibacillus sphaericus (strain C3-41).